The primary structure comprises 183 residues: MASSMLSTAAVACINRASPAQASMVAPFTGLKSTSAFPTTRKTTTDITSIASNGGRVQCMQVWPPRGKKFYETLSYLPPLTREQLAKEVEYLLRKGWVPCLEFELEHGTVYREYHRSPGYYDGRYWTMWKLPMFGCTDAVQVLQELDEMIKAYPDCYGRIIGFDNVRQVQCISFLAYKPKGAE.

A chloroplast-targeting transit peptide spans Met-1–Gln-58.

This sequence belongs to the RuBisCO small chain family. As to quaternary structure, heterohexadecamer of 8 large and 8 small subunits.

The protein resides in the plastid. It is found in the chloroplast. RuBisCO catalyzes two reactions: the carboxylation of D-ribulose 1,5-bisphosphate, the primary event in carbon dioxide fixation, as well as the oxidative fragmentation of the pentose substrate. Both reactions occur simultaneously and in competition at the same active site. Although the small subunit is not catalytic it is essential for maximal activity. The protein is Ribulose bisphosphate carboxylase small subunit, chloroplastic of Hevea brasiliensis (Para rubber tree).